Here is a 409-residue protein sequence, read N- to C-terminus: Glucose-1-phosphate adenylyltransferase (409 aa).

Alpha-D-glucose 1-phosphate-binding positions include glycine 168, 183–184, and serine 201; that span reads EK.

Belongs to the bacterial/plant glucose-1-phosphate adenylyltransferase family. As to quaternary structure, homotetramer.

It catalyses the reaction alpha-D-glucose 1-phosphate + ATP + H(+) = ADP-alpha-D-glucose + diphosphate. The protein operates within glycan biosynthesis; glycogen biosynthesis. Its function is as follows. Involved in the biosynthesis of ADP-glucose, a building block required for the elongation reactions to produce glycogen. Catalyzes the reaction between ATP and alpha-D-glucose 1-phosphate (G1P) to produce pyrophosphate and ADP-Glc. The protein is Glucose-1-phosphate adenylyltransferase of Corynebacterium efficiens (strain DSM 44549 / YS-314 / AJ 12310 / JCM 11189 / NBRC 100395).